A 215-amino-acid polypeptide reads, in one-letter code: Sodium channel regulatory subunit beta-2 (215 aa).

An N-terminal signal peptide occupies residues 1–29 (MHRDAWLPRPAFSLTGLSLFFSLVPSGRS). Over 30-157 (MEVTVPTTLS…LEVPPERDST (128 aa)) the chain is Extracellular. The Ig-like C2-type domain maps to 32–154 (VTVPTTLSVL…QVLLEVPPER (123 aa)). Asn42, Asn66, and Asn74 each carry an N-linked (GlcNAc...) asparagine glycan. 2 disulfide bridges follow: Cys50-Cys127 and Cys72-Cys75. A helical membrane pass occupies residues 158-179 (VAVIVGASVGGFLAVVILVLMV). Residues 180–215 (VKCVRRKKEQKLSTDDLKTEEEGKTDGEGNAEDGAK) lie on the Cytoplasmic side of the membrane. Residues 187–215 (KEQKLSTDDLKTEEEGKTDGEGNAEDGAK) are disordered. Basic and acidic residues predominate over residues 189-215 (QKLSTDDLKTEEEGKTDGEGNAEDGAK). Residue Ser192 is modified to Phosphoserine. Thr204 is modified (phosphothreonine).

The protein belongs to the sodium channel auxiliary subunit SCN2B (TC 8.A.17) family. As to quaternary structure, a voltage-gated sodium (Nav) channel consists of an ion-conducting pore-forming alpha subunit functional on its own that is regulated by one or more beta subunits. The beta subunit SCN2B is disulfide-linked to the pore-forming alpha subunit. Interacts with SCN1A; regulatory subunit of SCN1A/Nav1.1. Interacts with SCN2A; regulatory subunit of SCN2A/Nav1.2. Interacts with SCN3A; regulatory subunit of SCN3A/Nav1.3. Interacts with SCN5A; regulatory subunit of SCN5A/Nav1.5. Interacts with SCN8A; regulatory subunit of SCN8A/Nav1.6. Interacts with SCN9A; regulatory subunit of SCN9A/Nav1.7. Interacts with SCN10A; regulatory subunit of SCN10A/Nav1.8. Interacts with TNR; may play a crucial role in clustering and regulation of activity of SCN2B-containing Nav channels at nodes of Ranvier.

The protein resides in the cell membrane. It is found in the cell projection. It localises to the axon. In terms of biological role, regulatory subunit of multiple voltage-gated sodium (Nav) channels directly mediating the depolarization of excitable membranes. Navs, also called VGSCs (voltage-gated sodium channels) or VDSCs (voltage-dependent sodium channels), operate by switching between closed and open conformations depending on the voltage difference across the membrane. In the open conformation they allow Na(+) ions to selectively pass through the pore, along their electrochemical gradient. The influx of Na+ ions provokes membrane depolarization, initiating the propagation of electrical signals throughout cells and tissues. The accessory beta subunits participate in localization and functional modulation of the Nav channels. Modulates the activity of SCN1A/Nav1.1, SCN2A/Nav1.2, SCN2A/Nav1.3, SCN5A/Nav1.5, SCN8A/Nav1.6, SCN9A/Nav1.7 and SCN10A/Nav1.8. In Rattus norvegicus (Rat), this protein is Sodium channel regulatory subunit beta-2.